Reading from the N-terminus, the 288-residue chain is Phenazine biosynthesis-like domain-containing protein (288 aa).

Residue Glu46 is part of the active site.

It belongs to the PhzF family. As to quaternary structure, interacts with UNRIP/MAWD.

In Homo sapiens (Human), this protein is Phenazine biosynthesis-like domain-containing protein (PBLD).